Here is a 628-residue protein sequence, read N- to C-terminus: Cystathionine gamma-synthase-like enzyme iboG2 (628 aa).

Tyr313 lines the substrate pocket. An N6-(pyridoxal phosphate)lysine modification is found at Lys417.

Belongs to the trans-sulfuration enzymes family. Pyridoxal 5'-phosphate is required as a cofactor.

It participates in secondary metabolite biosynthesis. Its function is as follows. Cystathionine gamma-synthase-like enzyme; part of the gene cluster that mediates the biosynthesis of the psychoactive metabolites ibotenic acid and muscimol. The first committed step is glutamate hydroxylation by the 2-oxoglutarate-dependent dioxygenase iboH, and the last step is decarboxylation of ibotenic acid to muscimol by the decarboxylase iboD. The order of the intermediate reactions is somewhat ambiguous. IboA likely activates the carboxylic acid at position 5 to introduce an amide bond, and the flavin monooxygenase iboF generates the N-O bond. There are several options for the latter step. One option is that iboF directly hydroxylates the amide nitrogen formed by iboA to produce a hydroxamic acid species. Another option is that iboF hydroxylates an external N-containing compound, whose resulting N-O bond is subsequently introduced into the hydroxyglutamate scaffold. The paralogous PLP-dependent cystathionine gamma-synthase-like enzymes iboG1 and iboG2 are likely involved in substitution of the OH group at position 3 by the O-N moiety. The first cyclic intermediate is most probably tricholomic acid which is likely desaturated to ibotenic acid by the cytochrome P450 monooxygenase iboC. This Amanita muscaria (strain Koide BX008) protein is Cystathionine gamma-synthase-like enzyme iboG2.